The chain runs to 379 residues: tRNA (guanine(26)-N(2))-dimethyltransferase (379 aa).

Residues 1-26 form a disordered region; sequence MECREITEGSTTFTAPVQDETTQFPP. Residues 4 to 369 enclose the Trm1 methyltransferase domain; the sequence is REITEGSTTF…APLPLIEEKI (366 aa). Residues 8-25 are compositionally biased toward polar residues; that stretch reads EGSTTFTAPVQDETTQFP. Positions 41, 66, 82, 108, and 109 each coordinate S-adenosyl-L-methionine. Zn(2+) contacts are provided by cysteine 237, cysteine 240, cysteine 257, and cysteine 260.

The protein belongs to the class I-like SAM-binding methyltransferase superfamily. Trm1 family.

It carries out the reaction guanosine(26) in tRNA + 2 S-adenosyl-L-methionine = N(2)-dimethylguanosine(26) in tRNA + 2 S-adenosyl-L-homocysteine + 2 H(+). In terms of biological role, dimethylates a single guanine residue at position 26 of a number of tRNAs using S-adenosyl-L-methionine as donor of the methyl groups. The chain is tRNA (guanine(26)-N(2))-dimethyltransferase from Methanocorpusculum labreanum (strain ATCC 43576 / DSM 4855 / Z).